The primary structure comprises 188 residues: UPF0301 protein Cag_1601 (188 aa).

Belongs to the UPF0301 (AlgH) family.

The sequence is that of UPF0301 protein Cag_1601 from Chlorobium chlorochromatii (strain CaD3).